Reading from the N-terminus, the 418-residue chain is Alpha-tubulin N-acetyltransferase 1 (418 aa).

In terms of domain architecture, N-acetyltransferase spans 1 to 186 (MEFEFDVHKI…NNFVVFEGFF (186 aa)). Residues 120–133 (FYIH…GFGK) and 156–165 (SEKFLSFLRK) each bind acetyl-CoA. Disordered stretches follow at residues 237 to 292 (SSLG…MNLS) and 322 to 353 (QIKE…HQND). A compositionally biased stretch (basic and acidic residues) spans 277-287 (QEDHSQRRRTS). The span at 329–353 (RTDSSAQEGRTQDRPNGSNSQHQND) shows a compositional bias: polar residues.

It belongs to the acetyltransferase ATAT1 family.

The protein localises to the cytoplasm. It localises to the membrane. It is found in the clathrin-coated pit. The protein resides in the cell junction. Its subcellular location is the focal adhesion. The protein localises to the cell projection. It localises to the axon. It is found in the cytoskeleton. The protein resides in the spindle. It carries out the reaction L-lysyl-[alpha-tubulin] + acetyl-CoA = N(6)-acetyl-L-lysyl-[alpha-tubulin] + CoA + H(+). Specifically acetylates 'Lys-40' in alpha-tubulin on the lumenal side of microtubules. Promotes microtubule destabilization and accelerates microtubule dynamics; this activity may be independent of acetylation activity. Acetylates alpha-tubulin with a slow enzymatic rate, due to a catalytic site that is not optimized for acetyl transfer. Enters the microtubule through each end and diffuses quickly throughout the lumen of microtubules. Acetylates only long/old microtubules because of its slow acetylation rate since it does not have time to act on dynamically unstable microtubules before the enzyme is released. May be involved in neuron development. The sequence is that of Alpha-tubulin N-acetyltransferase 1 from Xenopus laevis (African clawed frog).